A 597-amino-acid chain; its full sequence is Probable translation initiation factor IF-2 (597 aa).

The tr-type G domain occupies 8–225 (LRQPIVVVLG…LLAGLTQQYL (218 aa)). The tract at residues 17–24 (GHVDHGKT) is G1. Position 17–24 (17–24 (GHVDHGKT)) interacts with GTP. The segment at 42-46 (EMTQE) is G2. The G3 stretch occupies residues 81–84 (DTPG). GTP contacts are provided by residues 81–85 (DTPGH) and 135–138 (NKID). The tract at residues 135-138 (NKID) is G4. Positions 203–205 (SGK) are G5.

This sequence belongs to the TRAFAC class translation factor GTPase superfamily. Classic translation factor GTPase family. IF-2 subfamily.

Its function is as follows. Function in general translation initiation by promoting the binding of the formylmethionine-tRNA to ribosomes. Seems to function along with eIF-2. The chain is Probable translation initiation factor IF-2 from Metallosphaera sedula (strain ATCC 51363 / DSM 5348 / JCM 9185 / NBRC 15509 / TH2).